The primary structure comprises 112 residues: Cornifelin homolog (112 aa).

Belongs to the cornifelin family.

The sequence is that of Cornifelin homolog (cnfn) from Danio rerio (Zebrafish).